A 594-amino-acid chain; its full sequence is Aspartate--tRNA(Asp/Asn) ligase (594 aa).

E175 lines the L-aspartate pocket. The interval Q199–K202 is aspartate. L-aspartate is bound by residues R221 and H454. Residue R221–E223 coordinates ATP. Residue E488 participates in ATP binding. R495 serves as a coordination point for L-aspartate. G540–R543 contributes to the ATP binding site.

This sequence belongs to the class-II aminoacyl-tRNA synthetase family. Type 1 subfamily. As to quaternary structure, homodimer.

Its subcellular location is the cytoplasm. The enzyme catalyses tRNA(Asx) + L-aspartate + ATP = L-aspartyl-tRNA(Asx) + AMP + diphosphate. Functionally, aspartyl-tRNA synthetase with relaxed tRNA specificity since it is able to aspartylate not only its cognate tRNA(Asp) but also tRNA(Asn). Reaction proceeds in two steps: L-aspartate is first activated by ATP to form Asp-AMP and then transferred to the acceptor end of tRNA(Asp/Asn). The sequence is that of Aspartate--tRNA(Asp/Asn) ligase from Chelativorans sp. (strain BNC1).